The sequence spans 295 residues: Indole-3-glycerol phosphate synthase (295 aa).

The protein belongs to the TrpC family.

It carries out the reaction 1-(2-carboxyphenylamino)-1-deoxy-D-ribulose 5-phosphate + H(+) = (1S,2R)-1-C-(indol-3-yl)glycerol 3-phosphate + CO2 + H2O. It functions in the pathway amino-acid biosynthesis; L-tryptophan biosynthesis; L-tryptophan from chorismate: step 4/5. The protein is Indole-3-glycerol phosphate synthase of Prochlorococcus marinus (strain NATL1A).